Consider the following 457-residue polypeptide: Putative metabolite transport protein YwtG (457 aa).

Transmembrane regions (helical) follow at residues 7–27 (IWLY…TGVI), 38–58 (LGLN…GAIL), 75–95 (AIMA…LAPN), 97–117 (GVMV…TTIV), 136–156 (LNQL…YIFA), 163–183 (WMLG…LFMP), 240–260 (ALIA…NTII), 276–296 (ASIL…LVAI), 309–329 (LFGN…NLFF), 340–360 (VICL…VVWV), 377–397 (VSTL…PILM), and 400–420 (IGIS…FLFV). Positions 438–457 (DLRDKNGQGGAAGKQQTVGT) are disordered.

Belongs to the major facilitator superfamily. Sugar transporter (TC 2.A.1.1) family.

Its subcellular location is the cell membrane. The sequence is that of Putative metabolite transport protein YwtG (ywtG) from Bacillus subtilis (strain 168).